Reading from the N-terminus, the 153-residue chain is Pheromone-binding protein Gp-9 (153 aa).

An N-terminal signal peptide occupies residues 1–19 (MKTFVLHIFIFALVAFASA). Disulfide bonds link Cys37-Cys77, Cys73-Cys129, and Cys118-Cys138.

The protein belongs to the PBP/GOBP family. In terms of assembly, homodimer.

The protein localises to the secreted. Functionally, colony queen number, a major feature of social organization, is associated with worker genotype for Gp-9. Colonies are headed by either a single reproductive queen (monogyne form) or multiple queens (polygyne form). Differences in worker Gp-9 genotypes between social forms may cause differences in workers' abilities to recognize queens and regulate their numbers. The chain is Pheromone-binding protein Gp-9 from Solenopsis invicta (Red imported fire ant).